The chain runs to 1416 residues: DNA-directed RNA polymerase subunit beta (1416 aa).

Residues 1388 to 1416 (AKAAREQAEGELGGPLGTPRGAAAEKNTA) form a disordered region.

This sequence belongs to the RNA polymerase beta chain family. The RNAP catalytic core consists of 2 alpha, 1 beta, 1 beta' and 1 omega subunit. When a sigma factor is associated with the core the holoenzyme is formed, which can initiate transcription.

It carries out the reaction RNA(n) + a ribonucleoside 5'-triphosphate = RNA(n+1) + diphosphate. Functionally, DNA-dependent RNA polymerase catalyzes the transcription of DNA into RNA using the four ribonucleoside triphosphates as substrates. The sequence is that of DNA-directed RNA polymerase subunit beta from Anaeromyxobacter sp. (strain Fw109-5).